The primary structure comprises 154 residues: 6,7-dimethyl-8-ribityllumazine synthase (154 aa).

5-amino-6-(D-ribitylamino)uracil contacts are provided by residues phenylalanine 22, 56-58 (AFE), and 80-82 (AVI). 85–86 (AT) is a binding site for (2S)-2-hydroxy-3-oxobutyl phosphate. Histidine 88 acts as the Proton donor in catalysis. Residue phenylalanine 113 coordinates 5-amino-6-(D-ribitylamino)uracil. Position 127 (arginine 127) interacts with (2S)-2-hydroxy-3-oxobutyl phosphate.

This sequence belongs to the DMRL synthase family.

It catalyses the reaction (2S)-2-hydroxy-3-oxobutyl phosphate + 5-amino-6-(D-ribitylamino)uracil = 6,7-dimethyl-8-(1-D-ribityl)lumazine + phosphate + 2 H2O + H(+). It functions in the pathway cofactor biosynthesis; riboflavin biosynthesis; riboflavin from 2-hydroxy-3-oxobutyl phosphate and 5-amino-6-(D-ribitylamino)uracil: step 1/2. In terms of biological role, catalyzes the formation of 6,7-dimethyl-8-ribityllumazine by condensation of 5-amino-6-(D-ribitylamino)uracil with 3,4-dihydroxy-2-butanone 4-phosphate. This is the penultimate step in the biosynthesis of riboflavin. This Clostridium botulinum (strain 657 / Type Ba4) protein is 6,7-dimethyl-8-ribityllumazine synthase.